We begin with the raw amino-acid sequence, 321 residues long: Cytochrome c biogenesis protein CcsA (321 aa).

7 consecutive transmembrane segments (helical) span residues 9-29 (ILTHISFSTISIVITIHLITL), 44-64 (GMIATFFSITGFLVSRWVSSG), 68-88 (LSNLYESLIFLSWTLYILHTI), 143-163 (MLLSYATLLCGSLLSAALLII), 225-245 (VISLGFTLLTVGILCGAVWAN), 259-273 (TWAFITWTIFAIYLH), and 288-308 (VASIGFLIIWICYFGINLLGI).

It belongs to the CcmF/CycK/Ccl1/NrfE/CcsA family. In terms of assembly, may interact with Ccs1.

The protein resides in the plastid. It is found in the chloroplast thylakoid membrane. Its function is as follows. Required during biogenesis of c-type cytochromes (cytochrome c6 and cytochrome f) at the step of heme attachment. This Zea mays (Maize) protein is Cytochrome c biogenesis protein CcsA.